The chain runs to 633 residues: Glutamyl-tRNA(Gln) amidotransferase subunit E (633 aa).

It belongs to the GatB/GatE family. GatE subfamily. In terms of assembly, heterodimer of GatD and GatE.

It carries out the reaction L-glutamyl-tRNA(Gln) + L-glutamine + ATP + H2O = L-glutaminyl-tRNA(Gln) + L-glutamate + ADP + phosphate + H(+). In terms of biological role, allows the formation of correctly charged Gln-tRNA(Gln) through the transamidation of misacylated Glu-tRNA(Gln) in organisms which lack glutaminyl-tRNA synthetase. The reaction takes place in the presence of glutamine and ATP through an activated gamma-phospho-Glu-tRNA(Gln). The GatDE system is specific for glutamate and does not act on aspartate. The polypeptide is Glutamyl-tRNA(Gln) amidotransferase subunit E (Methanococcus vannielii (strain ATCC 35089 / DSM 1224 / JCM 13029 / OCM 148 / SB)).